Consider the following 395-residue polypeptide: MKRFLLCSFALVLLYPAGIDMYLVGLPRIAADLNASEAQLHIAFSVYLAGMATAMLFAGKIADQSGRKPVAIVGALVFMMASLLCSRASEGSLFLSGRFLQGVGAGGCYVVAFAILRDTLDEHRRAKVLSLLNGITCIVPVLAPVVGHLIMLRFPWQSLFYTMSAMGIIVGLLSLFILRETRPARRAPRDLSRSSPAAESLVNRFFVSRLAITTLSVSVILTFVNASPVLLMEVMGFSRGDYAITMALTAGVSMVVSFSTPFALGLFKPRTLMLVSQGLFLTAGMTLSLAHTNTVTLFGLTLICAGFSVGFGVAMSQALGPFSLRAGVASSTLGIAQVCGSSLWIWLAAILGISAMNMLIGILIGCSIVSILLIFSVAPNRSVAEHEEIPYQSRS.

12 helical membrane-spanning segments follow: residues 4-24, 42-62, 69-89, 93-113, 131-151, 158-178, 217-237, 247-267, 271-291, 295-315, 333-353, and 358-378; these read FLLCSFALVLLYPAGIDMYLV, IAFSVYLAGMATAMLFAGKIA, PVAIVGALVFMMASLLCSRAS, LFLSGRFLQGVGAGGCYVVAF, LLNGITCIVPVLAPVVGHLIM, SLFYTMSAMGIIVGLLSLFIL, VSVILTFVNASPVLLMEVMGF, ALTAGVSMVVSFSTPFALGLF, TLMLVSQGLFLTAGMTLSLAH, VTLFGLTLICAGFSVGFGVAM, LGIAQVCGSSLWIWLAAILGI, and MLIGILIGCSIVSILLIFSVA.

This sequence belongs to the major facilitator superfamily. DHA1 family. MdtL (TC 2.A.1.2.22) subfamily.

The protein resides in the cell inner membrane. The chain is Multidrug resistance protein MdtL from Salmonella heidelberg (strain SL476).